We begin with the raw amino-acid sequence, 796 residues long: Striatin-3 (796 aa).

The residue at position 1 (M1) is an N-acetylmethionine. The span at 1–13 (MDELAGGGGGGQG) shows a compositional bias: gly residues. The interval 1–60 (MDELAGGGGGGQGMAAPPRPQQGPGGNLSLPPGANGAPGGGGPPAAEAAGPPAGPELSRP) is disordered. The segment at 71 to 79 (YIQHEWARF) is caveolin-binding. A coiled-coil region spans residues 77–136 (ARFEMERAHWEVERAELQARIAFLQGERKGQENLKKDLVRRIKMLEYALKQERAKYHKLK). At T150 the chain carries Phosphothreonine. Residues 166–183 (QNSQLTWKQGRQLLRQYL) are calmodulin-binding. S202, S214, S229, S257, and S334 each carry phosphoserine. 2 disordered regions span residues 252 to 271 (ENAD…IPEG) and 311 to 335 (EDGE…DLSP). Residues 253 to 264 (NADDSDEEENDM) are compositionally biased toward acidic residues. WD repeat units follow at residues 477 to 516 (SHFD…PAKK), 530 to 569 (AHIG…VDPY), 583 to 622 (AHTD…PCVC), 678 to 717 (QSSN…MIHS), 720 to 759 (AHLD…CVQE), and 766 to 795 (KLDE…AKVF).

This sequence belongs to the WD repeat striatin family. In terms of assembly, tetramerizes. Part of the core of STRIPAK complexes composed of PP2A catalytic and scaffolding subunits, the striatins (PP2A regulatory subunits), the striatin-associated proteins MOB4, STRIP1 and STRIP2, PDCD10 and members of the STE20 kinases, such as STK24 and STK26. The STRIPAK complex can be extended by adapter proteins such as SLMAP:SIKE1 or CTTNBP2NL. Interacts with CDC42BPB. As to expression, mainly expressed in the brain and muscles but is also detected at low levels in various tissues such as kidney, spleen and lung.

The protein resides in the cytoplasm. Its subcellular location is the membrane. Its function is as follows. Calmodulin-binding scaffolding protein which is the center of the striatin-interacting phosphatase and kinase (STRIPAK) complexes. STRIPAK complexes have critical roles in protein (de)phosphorylation and are regulators of multiple signaling pathways including Hippo, MAPK, nuclear receptor and cytoskeleton remodeling. Different types of STRIPAK complexes are involved in a variety of biological processes such as cell growth, differentiation, apoptosis, metabolism and immune regulation. This is Striatin-3 (Strn3) from Mus musculus (Mouse).